Here is a 151-residue protein sequence, read N- to C-terminus: Large ribosomal subunit protein bL9 (151 aa).

This sequence belongs to the bacterial ribosomal protein bL9 family.

Its function is as follows. Binds to the 23S rRNA. In Lactobacillus acidophilus (strain ATCC 700396 / NCK56 / N2 / NCFM), this protein is Large ribosomal subunit protein bL9.